A 313-amino-acid polypeptide reads, in one-letter code: D-alanine--D-alanine ligase (313 aa).

The ATP-grasp domain maps to 107–303 (KQAFAAAGLT…FEALVEQIAC (197 aa)). 135–188 (PFGLPVVVKPVQEGSSVGVTIVKKPEDLQAALDEAFRYDTLVLVEKYIKGQEVQ) serves as a coordination point for ATP. The Mg(2+) site is built by D256, E269, and N271.

It belongs to the D-alanine--D-alanine ligase family. Mg(2+) is required as a cofactor. It depends on Mn(2+) as a cofactor.

Its subcellular location is the cytoplasm. It carries out the reaction 2 D-alanine + ATP = D-alanyl-D-alanine + ADP + phosphate + H(+). Its pathway is cell wall biogenesis; peptidoglycan biosynthesis. Its function is as follows. Cell wall formation. The polypeptide is D-alanine--D-alanine ligase (Trichlorobacter lovleyi (strain ATCC BAA-1151 / DSM 17278 / SZ) (Geobacter lovleyi)).